A 186-amino-acid chain; its full sequence is Elongation factor P (186 aa).

It belongs to the elongation factor P family.

The protein resides in the cytoplasm. It participates in protein biosynthesis; polypeptide chain elongation. Its function is as follows. Involved in peptide bond synthesis. Stimulates efficient translation and peptide-bond synthesis on native or reconstituted 70S ribosomes in vitro. Probably functions indirectly by altering the affinity of the ribosome for aminoacyl-tRNA, thus increasing their reactivity as acceptors for peptidyl transferase. The protein is Elongation factor P of Thiobacillus denitrificans (strain ATCC 25259 / T1).